The chain runs to 208 residues: MSSQIKLTKNAYRLEKVKLSRLETYLPTLKLKKALLQVEVTNAIREASESIQAYEAARESIYAFAELYSVPLYVDAIANSFKIEKVEKDYENITGIEVPVIRNIILAESSYSVLDTPIWIDTLVAYSREFVINKVRSEVAAEKQRILEEELRNVSIRVNLFEKKLIPETTRMIKKIAIFLSDRSITDVGQVKMAKKKIQQRKEESECA.

The protein belongs to the V-ATPase D subunit family.

Produces ATP from ADP in the presence of a proton gradient across the membrane. The sequence is that of V-type ATP synthase subunit D from Chlamydia caviae (strain ATCC VR-813 / DSM 19441 / 03DC25 / GPIC) (Chlamydophila caviae).